The primary structure comprises 280 residues: Acyl-[acyl-carrier-protein]--UDP-N-acetylglucosamine O-acyltransferase (280 aa).

It belongs to the transferase hexapeptide repeat family. LpxA subfamily. Homotrimer.

Its subcellular location is the cytoplasm. The catalysed reaction is a (3R)-hydroxyacyl-[ACP] + UDP-N-acetyl-alpha-D-glucosamine = a UDP-3-O-[(3R)-3-hydroxyacyl]-N-acetyl-alpha-D-glucosamine + holo-[ACP]. It participates in glycolipid biosynthesis; lipid IV(A) biosynthesis; lipid IV(A) from (3R)-3-hydroxytetradecanoyl-[acyl-carrier-protein] and UDP-N-acetyl-alpha-D-glucosamine: step 1/6. Its function is as follows. Involved in the biosynthesis of lipid A, a phosphorylated glycolipid that anchors the lipopolysaccharide to the outer membrane of the cell. The protein is Acyl-[acyl-carrier-protein]--UDP-N-acetylglucosamine O-acyltransferase of Chlamydia trachomatis serovar A (strain ATCC VR-571B / DSM 19440 / HAR-13).